We begin with the raw amino-acid sequence, 671 residues long: Replication protein A 70 kDa DNA-binding subunit (671 aa).

Disordered stretches follow at residues 143 to 166 and 190 to 219; these read QVSQ…PAVN and MNKT…LQIS. The span at 199–213 shows a compositional bias: low complexity; sequence NNNNNNNNNGNNKNN. Residues 240-322 constitute a DNA-binding region (OB); that stretch reads QTIKVRITKK…NKGDHTVTVN (83 aa). A C4-type zinc finger spans residues 530 to 549; that stretch reads CFSCKKKIARNNEVWTCINC.

It belongs to the replication factor A protein 1 family. As to quaternary structure, component of the replication protein A complex (RPA), a heterotrimeric complex composed of RPA1, RPA2/TEB2 and RPA3/TEB3.

In terms of biological role, as part of the heterotrimeric replication protein A (RPA) complex, binds and stabilizes single-stranded DNA intermediates, that form during DNA replication or upon DNA stress. It prevents their reannealing and in parallel, recruits and activates different proteins and complexes involved in DNA metabolism. Thereby, it plays an essential role both in DNA replication and the cellular response to DNA damage. In the cellular response to DNA damage, the RPA complex controls DNA repair and DNA damage checkpoint activation. This Tetrahymena thermophila (strain SB210) protein is Replication protein A 70 kDa DNA-binding subunit.